The primary structure comprises 666 residues: Translation factor guf1, mitochondrial (666 aa).

A mitochondrion-targeting transit peptide spans 1–43; sequence MRGCLQLARWLRAAPKCPAASLLKPPSGLANPARFFTTSTACW. In terms of domain architecture, tr-type G spans 68-248; the sequence is DRYRNFCIVA…TVVEKIPAPV (181 aa). GTP contacts are provided by residues 77–84, 141–145, and 195–198; these read AHVDHGKS, DTPGH, and NKVD.

Belongs to the TRAFAC class translation factor GTPase superfamily. Classic translation factor GTPase family. LepA subfamily.

Its subcellular location is the mitochondrion inner membrane. The catalysed reaction is GTP + H2O = GDP + phosphate + H(+). Promotes mitochondrial protein synthesis. May act as a fidelity factor of the translation reaction, by catalyzing a one-codon backward translocation of tRNAs on improperly translocated ribosomes. Binds to mitochondrial ribosomes in a GTP-dependent manner. This Aspergillus niger (strain ATCC MYA-4892 / CBS 513.88 / FGSC A1513) protein is Translation factor guf1, mitochondrial (guf1).